The chain runs to 114 residues: Methylamine utilization protein MauL (114 aa).

It participates in one-carbon metabolism; methylamine degradation. Functionally, probably involved in TTQ prosthetic group biosynthesis. The sequence is that of Methylamine utilization protein MauL (mauL) from Methylorubrum extorquens (strain ATCC 14718 / DSM 1338 / JCM 2805 / NCIMB 9133 / AM1) (Methylobacterium extorquens).